We begin with the raw amino-acid sequence, 724 residues long: Actin-related protein 5 (724 aa).

3 disordered regions span residues 358 to 391 (QSLR…LMNV), 412 to 450 (TTAE…ESYL), and 467 to 488 (KKRL…IGRG). A compositionally biased stretch (basic and acidic residues) spans 414–446 (AEGRLRARQKRNEEELEKEKRNQLEEERRRENP). Phosphoserine is present on Ser542.

Belongs to the actin family. ARP5 subfamily. Component of the INO80 chromatin-remodeling complex. Interacts with EEN. As to expression, expressed ubiquitously in seedlings, roots, leaves, buds, flowers and siliques.

It localises to the nucleus. It is found in the nucleoplasm. The protein localises to the cytoplasm. Probable subunit of a chromatin-remodeling complex. Involved in DNA repair. Required for multicellular development of all organs. This Arabidopsis thaliana (Mouse-ear cress) protein is Actin-related protein 5.